Here is a 466-residue protein sequence, read N- to C-terminus: Delta-1 crystallin (466 aa).

This sequence belongs to the lyase 1 family. Argininosuccinate lyase subfamily. In terms of assembly, homotetramer. Eye lens.

Its function is as follows. Delta crystallin, the principal crystallin in embryonic lens, is found only in birds and reptiles. This Meleagris gallopavo (Wild turkey) protein is Delta-1 crystallin (ASL1).